We begin with the raw amino-acid sequence, 253 residues long: Probable transcriptional regulatory protein Mmar10_2433 (253 aa).

The protein belongs to the TACO1 family.

The protein localises to the cytoplasm. In Maricaulis maris (strain MCS10) (Caulobacter maris), this protein is Probable transcriptional regulatory protein Mmar10_2433.